The sequence spans 323 residues: MSFFVNRVWYGNHFLQWILVPFSWLYRIVIRTRRWYLQRFCQQLYPIPIIVVGNVTVGGVGKTPLVIEIAKKIQQKGLKVGIVSRGYKAAIKHFPYEVKLNDSAELVGDEPLMMARKINCPVVIAPKRNEAVRYLLDKHSVEIIISDDGLQHYKMGRSIEIVVIDGMRKLGNGFCLPAGPLREPDSRLKQVDFVIVNQGAAGGAYSMELIPKNIVRLSTQEEVSKDSFTSEVAAVAGIGNPQRFYSTLSQLGIKFNPYSYPDHHQFKPHDLNDIDLPVIMTEKDAVKCYSFSSDKLYYLPVEAKLNDSFWEAFWSHQQLQGYY.

Thr-56–Thr-63 lines the ATP pocket.

It belongs to the LpxK family.

It catalyses the reaction a lipid A disaccharide + ATP = a lipid IVA + ADP + H(+). The protein operates within glycolipid biosynthesis; lipid IV(A) biosynthesis; lipid IV(A) from (3R)-3-hydroxytetradecanoyl-[acyl-carrier-protein] and UDP-N-acetyl-alpha-D-glucosamine: step 6/6. Functionally, transfers the gamma-phosphate of ATP to the 4'-position of a tetraacyldisaccharide 1-phosphate intermediate (termed DS-1-P) to form tetraacyldisaccharide 1,4'-bis-phosphate (lipid IVA). The polypeptide is Tetraacyldisaccharide 4'-kinase (Legionella pneumophila (strain Lens)).